The sequence spans 520 residues: Glutamyl-tRNA(Gln) amidotransferase subunit A (520 aa).

Active-site charge relay system residues include lysine 80 and serine 155. Residue serine 179 is the Acyl-ester intermediate of the active site.

The protein belongs to the amidase family. GatA subfamily. As to quaternary structure, heterotrimer of A, B and C subunits.

It carries out the reaction L-glutamyl-tRNA(Gln) + L-glutamine + ATP + H2O = L-glutaminyl-tRNA(Gln) + L-glutamate + ADP + phosphate + H(+). Allows the formation of correctly charged Gln-tRNA(Gln) through the transamidation of misacylated Glu-tRNA(Gln) in organisms which lack glutaminyl-tRNA synthetase. The reaction takes place in the presence of glutamine and ATP through an activated gamma-phospho-Glu-tRNA(Gln). The chain is Glutamyl-tRNA(Gln) amidotransferase subunit A from Renibacterium salmoninarum (strain ATCC 33209 / DSM 20767 / JCM 11484 / NBRC 15589 / NCIMB 2235).